Here is a 107-residue protein sequence, read N- to C-terminus: Defensin-like protein 242 (107 aa).

A signal peptide spans 1 to 22; sequence MKVVAIFLASCVLFSLIPTHLS. Intrachain disulfides connect C45–C100, C55–C84, C65–C94, and C82–C96.

The protein belongs to the DEFL family.

Its subcellular location is the secreted. This Arabidopsis thaliana (Mouse-ear cress) protein is Defensin-like protein 242 (SCRL10).